A 515-amino-acid polypeptide reads, in one-letter code: Iroquois-class homeodomain protein IRX-4 (515 aa).

Positions 144–205 (GTRRKNATRE…NARRRLKKEN (62 aa)) form a DNA-binding region, homeobox; TALE-type. 3 disordered regions span residues 205–258 (NKMT…ELEL), 278–307 (TPFQ…STTL), and 398–425 (GPTG…RHQD). Positions 214–223 (KCADEKRPYG) are enriched in basic and acidic residues. Residues 224 to 236 (EGEEEEAGEEESR) are compositionally biased toward acidic residues. Residues 237-257 (EEPLKSAKSEGHAGKDDKELE) show a composition bias toward basic and acidic residues. Positions 399-419 (PTGVSATTPASSPAVTAPSGA) are enriched in low complexity.

It belongs to the TALE/IRO homeobox family. In terms of assembly, interacts with the vitamin D receptor VDR but doesn't affect its transactivation activity. As to expression, expressed in the developing central nervous system, skin, and vibrissae, but predominantly expressed in the cardiac ventricles of the developing heart. Not expressed in the developing metanephric kidney or adult kidney.

The protein localises to the nucleus. In terms of biological role, likely to be an important mediator of ventricular differentiation during cardiac development. The polypeptide is Iroquois-class homeodomain protein IRX-4 (Irx4) (Mus musculus (Mouse)).